Consider the following 209-residue polypeptide: Orotate phosphoribosyltransferase (209 aa).

Residues Arg96, Lys100, His102, and 122-130 (EDLISTGGS) each bind 5-phospho-alpha-D-ribose 1-diphosphate. Residue Ser126 participates in orotate binding.

Belongs to the purine/pyrimidine phosphoribosyltransferase family. PyrE subfamily. As to quaternary structure, homodimer. The cofactor is Mg(2+).

The catalysed reaction is orotidine 5'-phosphate + diphosphate = orotate + 5-phospho-alpha-D-ribose 1-diphosphate. It functions in the pathway pyrimidine metabolism; UMP biosynthesis via de novo pathway; UMP from orotate: step 1/2. Functionally, catalyzes the transfer of a ribosyl phosphate group from 5-phosphoribose 1-diphosphate to orotate, leading to the formation of orotidine monophosphate (OMP). The protein is Orotate phosphoribosyltransferase of Streptococcus agalactiae serotype Ia (strain ATCC 27591 / A909 / CDC SS700).